The following is a 555-amino-acid chain: CTP synthase (555 aa).

The interval 1 to 265 (MTRYIFITGG…GNRVCEKLNI (265 aa)) is amidoligase domain. S13 contributes to the CTP binding site. Position 13 (S13) interacts with UTP. Residues 14-19 (SLGKGI) and D71 each bind ATP. Positions 71 and 139 each coordinate Mg(2+). CTP-binding positions include 146–148 (DIE), 186–191 (KTKPTQ), and K222. Residues 186–191 (KTKPTQ) and K222 each bind UTP. Residues 290-541 (TVAVVGKYVD…IKAGLAAKEA (252 aa)) enclose the Glutamine amidotransferase type-1 domain. G351 lines the L-glutamine pocket. The active-site Nucleophile; for glutamine hydrolysis is the C378. Residues 379–382 (LGMQ), E402, and R469 contribute to the L-glutamine site. Residues H514 and E516 contribute to the active site.

Belongs to the CTP synthase family. Homotetramer.

It carries out the reaction UTP + L-glutamine + ATP + H2O = CTP + L-glutamate + ADP + phosphate + 2 H(+). The enzyme catalyses L-glutamine + H2O = L-glutamate + NH4(+). It catalyses the reaction UTP + NH4(+) + ATP = CTP + ADP + phosphate + 2 H(+). The protein operates within pyrimidine metabolism; CTP biosynthesis via de novo pathway; CTP from UDP: step 2/2. Allosterically activated by GTP, when glutamine is the substrate; GTP has no effect on the reaction when ammonia is the substrate. The allosteric effector GTP functions by stabilizing the protein conformation that binds the tetrahedral intermediate(s) formed during glutamine hydrolysis. Inhibited by the product CTP, via allosteric rather than competitive inhibition. Its function is as follows. Catalyzes the ATP-dependent amination of UTP to CTP with either L-glutamine or ammonia as the source of nitrogen. Regulates intracellular CTP levels through interactions with the four ribonucleotide triphosphates. This is CTP synthase from Coxiella burnetii (strain RSA 493 / Nine Mile phase I).